The sequence spans 1363 residues: Collagen alpha-2(I) chain (1363 aa).

An N-terminal signal peptide occupies residues 1 to 22 (MLSFVDTRILLLLAVTSYLATS). The residue at position 23 (glutamine 23) is a Pyrrolidone carboxylic acid. Positions 23–77 (QHLFQASAGRKGPRGDKGPQGERGPPGPPGRDGEDGPPGPPGPPGPPGLGGNFAA) are cleaved as a propeptide — N-terminal propeptide. The segment at 28–1110 (ASAGRKGPRG…GPNGGGYEVG (1083 aa)) is disordered. Pro residues predominate over residues 59 to 69 (PPGPPGPPGPP). Pyrrolidone carboxylic acid is present on glutamine 78. Position 83 is an allysine (lysine 83). The span at 88-97 (GPGPMGLMGP) shows a compositional bias: low complexity. Positions 98–110 (RGPPGASGPPGPP) are enriched in pro residues. Residues 112–128 (FQGVPGEPGEPGQTGPQ) show a composition bias toward low complexity. Basic and acidic residues predominate over residues 140 to 154 (AGEDGHPGKPGRPGE). A 5-hydroxylysine; alternate modification is found at lysine 176. A glycan (O-linked (Gal...) hydroxylysine; alternate) is linked at lysine 176. Composition is skewed to low complexity over residues 224-263 (IGAPGPAGARGSDGSAGPTGPAGPIGAAGPPGFPGAPGAK) and 299-320 (PGANGLPGAKGAAGLPGVAGAP). Over residues 322 to 335 (LPGPRGIPGPPGPA) the composition is skewed to pro residues. Proline 440 and proline 443 each carry 4-hydroxyproline. Low complexity-rich tracts occupy residues 601–610 (PAGPIGSRGP) and 674–683 (RGLPGAIGAP). Positions 684–699 (GPAGGAGDRGEGGPAG) are enriched in gly residues. A compositionally biased stretch (low complexity) spans 721–736 (PSGFAGPPGAAGQPGA). The span at 737–746 (KGERGPKGPK) shows a compositional bias: basic and acidic residues. 5 stretches are compositionally biased toward low complexity: residues 748-794 (ETGP…AGRV), 842-875 (AGEKGPSGEAGAAGPPGTPGPQGILGAPGILGLP), 898-931 (VSGPPGARGPSGPVGSPGPNGAPGEAGRDGNPGN), 955-965 (PSGALGAPGPH), and 986-995 (VGPAGAFGPR). A compositionally biased stretch (basic and acidic residues) spans 1004 to 1015 (RGEKGEPGDKGH). Residues 1036–1049 (QHGDQGPPGNNGPA) show a composition bias toward low complexity. Composition is skewed to pro residues over residues 1051–1060 (PRGPPGPSGP) and 1088–1102 (AGPPGPPGPPGPPGP). The propeptide at 1118–1363 (ADQPSLRPKD…GLHIGPVCFK (246 aa)) is C-terminal propeptide. Residues 1128 to 1363 (YEVDATLKTL…GLHIGPVCFK (236 aa)) form the Fibrillar collagen NC1 domain. 3 disulfides stabilise this stretch: cysteine 1158–cysteine 1190, cysteine 1198–cysteine 1361, and cysteine 1269–cysteine 1314. Residues aspartate 1176, asparagine 1178, glutamine 1179, cysteine 1181, and aspartate 1184 each coordinate Ca(2+). Asparagine 1264 is a glycosylation site (N-linked (GlcNAc...) asparagine).

Belongs to the fibrillar collagen family. Trimers of one alpha 2(I) and two alpha 1(I) chains. Post-translationally, prolines at the third position of the tripeptide repeating unit (G-X-Y) are hydroxylated in some or all of the chains. In terms of processing, the N-terminus of the mature protein is blocked. In terms of tissue distribution, forms the fibrils of tendon, ligaments and bones. In bones the fibrils are mineralized with calcium hydroxyapatite.

It is found in the secreted. It localises to the extracellular space. The protein resides in the extracellular matrix. Type I collagen is a member of group I collagen (fibrillar forming collagen). The polypeptide is Collagen alpha-2(I) chain (COL1A2) (Gallus gallus (Chicken)).